The chain runs to 284 residues: N-methyltransferase sirN (284 aa).

The protein belongs to the methyltransferase superfamily. LaeA methyltransferase family.

Its pathway is mycotoxin biosynthesis. N-methyltransferase; part of the gene cluster that mediates the biosynthesis of sirodesmin PL, an epipolythiodioxopiperazine (ETP) characterized by a disulfide bridged cyclic dipeptide and that acts as a phytotoxin which is involved in the blackleg didease of canola. SirD catalyzes the O-prenylation of L-tyrosine (L-Tyr) in the presence of dimethylallyl diphosphate (DMAPP) to yield 4-O-dimethylallyl-L-Tyr, and therefore represents probably the first pathway-specific enzyme in the biosynthesis of sirodesmin PL. 4-O-dimethylallyl-L-Tyr, then undergoes condensation with L-Ser in a reaction catalyzed by the non-ribosomal peptide synthase sirP to form the diketopiperazine (DKP) backbone. Further bishydroxylation of the DKP performed by the cytochrome P450 monooxygenase sirC leads to the production of the intermediate phomamide. This step is essential to form the reactive thiol group required for toxicity of sirodesmin PL. The next steps of sirodesmin biosynthesis are not well understood yet but some predictions could be made from intermediate compounds identification. Phomamide is converted into phomalizarine via oxidation, probably by sirT. Further oxidation, methylation (by sirM or sirN) and reduction steps convert phomalizarine to deacetyl sirodesmin. Finally, acetyltransferase sirH probably acetylates deacetyl sirodesmin to produce sirodesmin PL. The sequence is that of N-methyltransferase sirN from Leptosphaeria maculans (Blackleg fungus).